The primary structure comprises 284 residues: Pantothenate synthetase (284 aa).

30 to 37 (MGNLHEGH) lines the ATP pocket. His-37 (proton donor) is an active-site residue. Position 61 (Gln-61) interacts with (R)-pantoate. Gln-61 provides a ligand contact to beta-alanine. Position 149–152 (149–152 (GEKD)) interacts with ATP. Gln-155 contributes to the (R)-pantoate binding site. Residues Val-178 and 186–189 (LSSR) contribute to the ATP site.

The protein belongs to the pantothenate synthetase family. In terms of assembly, homodimer.

It is found in the cytoplasm. The enzyme catalyses (R)-pantoate + beta-alanine + ATP = (R)-pantothenate + AMP + diphosphate + H(+). It functions in the pathway cofactor biosynthesis; (R)-pantothenate biosynthesis; (R)-pantothenate from (R)-pantoate and beta-alanine: step 1/1. In terms of biological role, catalyzes the condensation of pantoate with beta-alanine in an ATP-dependent reaction via a pantoyl-adenylate intermediate. This chain is Pantothenate synthetase, found in Yersinia pseudotuberculosis serotype O:1b (strain IP 31758).